An 872-amino-acid chain; its full sequence is Leucine--tRNA ligase (872 aa).

The 'HIGH' region motif lies at 42–52 (PYPSGSLHMGH). The 'KMSKS' region motif lies at 634 to 638 (TMSKS). Residue Lys637 participates in ATP binding.

Belongs to the class-I aminoacyl-tRNA synthetase family.

The protein resides in the cytoplasm. The catalysed reaction is tRNA(Leu) + L-leucine + ATP = L-leucyl-tRNA(Leu) + AMP + diphosphate. This chain is Leucine--tRNA ligase, found in Trichormus variabilis (strain ATCC 29413 / PCC 7937) (Anabaena variabilis).